Consider the following 420-residue polypeptide: Innexin-3 (420 aa).

The next 4 membrane-spanning stretches (helical) occupy residues Ala-33–Ile-53, Trp-104–Ser-124, Met-193–Leu-213, and Ile-278–Leu-298. The segment at Asn-378–Pro-405 is disordered. Positions Glu-395–Pro-405 are enriched in basic and acidic residues.

The protein belongs to the pannexin family. As to quaternary structure, interacts with F-actin. Evenly distributed along the adjoining membranes of the two pm5 pharyngeal muscle cells.

It localises to the cell membrane. It is found in the cell junction. Its subcellular location is the gap junction. In terms of biological role, structural component of gap junctions. Plays a role in maintaining gap junction activity to promote phayngeal muscle contraction. This is Innexin-3 from Caenorhabditis elegans.